A 3707-amino-acid polypeptide reads, in one-letter code: Basement membrane-specific heparan sulfate proteoglycan core protein (3707 aa).

The N-terminal stretch at 1–21 (MGQRAVGSLLLGLLLHARLLA) is a signal peptide. Residues Ser65, Ser71, and Ser76 are each glycosylated (O-linked (Xyl...) (heparan sulfate) serine). The SEA domain maps to 80 to 191 (QMVYFRALVN…WGFKFRRLGT (112 aa)). Asn89 carries an N-linked (GlcNAc...) asparagine glycan. LDL-receptor class A domains are found at residues 195–234 (FPRV…ELNC), 281–319 (GPSA…ELGC), 320–359 (ASPP…EANC), and 360–403 (SVKQ…EFGC). 13 disulfide bridges follow: Cys199-Cys212, Cys206-Cys225, Cys219-Cys234, Cys285-Cys297, Cys292-Cys310, Cys304-Cys319, Cys325-Cys337, Cys332-Cys350, Cys344-Cys359, Cys368-Cys381, Cys375-Cys394, Cys388-Cys403, and Cys428-Cys479. Asn358 carries an N-linked (GlcNAc...) asparagine glycan. Residues 404 to 504 (MPPQVVTPPQ…VLELVPQRGP (101 aa)) form the Ig-like C2-type 1 domain. The Laminin EGF-like 1; first part domain occupies 521 to 530 (CFCFGVTNVC). Positions 538-730 (DQIRLSFDQP…IHGRAHSVEE (193 aa)) constitute a Laminin IV type A 1 domain. Residue Asn554 is glycosylated (N-linked (GlcNAc...) asparagine). The Laminin EGF-like 1; second part domain maps to 731–763 (CRCPIGYSGLSCESCDAHFTRVPGGPYLGTCSG). 11 disulfides stabilise this stretch: Cys764–Cys773, Cys766–Cys780, Cys783–Cys792, Cys795–Cys811, Cys814–Cys829, Cys816–Cys839, Cys842–Cys851, Cys854–Cys869, Cys879–Cys892, Cys894–Cys903, and Cys906–Cys921. Laminin EGF-like domains lie at 764–813 (CNCN…ACRP) and 814–871 (CPCP…KCRP). The region spanning 879–923 (CDERGSLGTSGETCRCKNNVVGRLCNECSDGSFHLSKQNPDGCLK) is the Laminin EGF-like 4; truncated domain. Residues 924-933 (CFCMGVSRQC) form the Laminin EGF-like 5; first part domain. The Laminin IV type A 2 domain maps to 941–1125 (AQVLGASEQP…GQDSAREVEQ (185 aa)). Residues 1126–1158 (CTCPPGYRGPSCQDCDTGYTRVPSGLYLGTCER) form the Laminin EGF-like 5; second part domain. 12 disulfide bridges follow: Cys1159/Cys1168, Cys1161/Cys1175, Cys1178/Cys1187, Cys1190/Cys1206, Cys1209/Cys1224, Cys1211/Cys1234, Cys1237/Cys1246, Cys1249/Cys1263, Cys1275/Cys1287, Cys1277/Cys1293, Cys1295/Cys1304, and Cys1307/Cys1322. Laminin EGF-like domains are found at residues 1159–1208 (CNCH…DCQP), 1209–1265 (CPCY…PCHR), and 1275–1324 (CGCD…GCLP). One can recognise a Laminin EGF-like 9; first part domain in the interval 1325–1334 (CFCMGVTQQC). The Laminin IV type A 3 domain maps to 1344 to 1529 (ISTHFAPGDF…SGPRALEVEE (186 aa)). Residues 1530–1562 (CRCPPGYVGLSCQDCAPGYTRTGSGLYLGQCEL) enclose the Laminin EGF-like 9; second part domain. 8 disulfides stabilise this stretch: Cys1563/Cys1572, Cys1565/Cys1579, Cys1582/Cys1591, Cys1594/Cys1610, Cys1613/Cys1628, Cys1615/Cys1638, Cys1641/Cys1650, and Cys1653/Cys1668. Laminin EGF-like domains lie at 1563 to 1612 (CECN…DCQP) and 1613 to 1670 (CACP…RCQP). Ig-like C2-type domains lie at 1677-1771 (EVQI…KPIM), 1772-1865 (VTVE…STAP), 1866-1954 (VASI…GGSG), 1955-2049 (PRVQ…PAPA), 2050-2148 (SPAP…PGVV), 2149-2244 (PPIR…PAPG), 2245-2343 (LAQP…RLRS), 2344-2436 (PVIS…PPTV), 2437-2532 (SVLP…APGT), 2533-2619 (PQVQ…VESP), 2620-2720 (PYAT…GGST), 2721-2809 (PTVQ…ALPS), 2810-2895 (VLIN…LVQA), and 2896-2980 (LPQI…LQVP). A disordered region spans residues 1713-1733 (DGRPLPSSAQQRHQGSELHFP). 3 disulfide bridges follow: Cys1792–Cys1839, Cys1886–Cys1932, and Cys1976–Cys2021. A disordered region spans residues 2039 to 2061 (SPSTNSPPAPASPAPIRIESSSS). The span at 2052-2061 (APIRIESSSS) shows a compositional bias: low complexity. 3 disulfides stabilise this stretch: Cys2073–Cys2118, Cys2170–Cys2215, and Cys2268–Cys2313. Asn2336, Asn2394, and Asn2427 each carry an N-linked (GlcNAc...) asparagine glycan. Cysteines 2365 and 2413 form a disulfide. Disulfide bonds link Cys2456-Cys2506 and Cys2554-Cys2599. Asn2600 carries N-linked (GlcNAc...) asparagine glycosylation. A disulfide bridge links Cys2641 with Cys2686. 2 disulfides stabilise this stretch: Cys2831/Cys2876 and Cys2917/Cys2962. Residues 2984-3162 (IPYFTQTPYS…VNLTTHGISH (179 aa)) form the Laminin G-like 1 domain. Asn3098 and Asn3154 each carry an N-linked (GlcNAc...) asparagine glycan. Cystine bridges form between Cys3137-Cys3163, Cys3166-Cys3177, Cys3171-Cys3187, Cys3204-Cys3216, and Cys3229-Cys3238. The EGF-like domain maps to 3163-3241 (CPTCQDRPCQ…GRSGVRCEEG (79 aa)). The Laminin G-like 2 domain maps to 3245 to 3425 (TTPSMSGAGS…VGQCYDSSPC (181 aa)). Asn3385 is a glycosylation site (N-linked (GlcNAc...) asparagine). 7 cysteine pairs are disulfide-bonded: Cys3393-Cys3419, Cys3425-Cys3436, Cys3430-Cys3446, Cys3448-Cys3457, Cys3464-Cys3476, Cys3470-Cys3481, and Cys3483-Cys3492. Residue Ser3510 is glycosylated (O-linked (Xyl...) (chondroitin sulfate) serine). The Laminin G-like 3 domain occupies 3518–3705 (QYGAYFYDNG…AQAGANTRPC (188 aa)). Ca(2+) contacts are provided by Asp3574 and Leu3591. The segment at 3615 to 3617 (LRE) is mediates motor neuron attachment. Ca(2+) is bound by residues Ala3641 and Asn3643. Cys3671 and Cys3705 form a disulfide bridge. Residues 3680 to 3707 (ARPGAPPPQPLDLQHRAQAGANTRPCPS) form a disordered region.

Has a strong tendency to aggregate in dimers or stellate structures. Interacts with other basement membrane components such as laminin, prolargin and collagen type IV. Interacts with COL13A1. Interacts with FGFBP1. Interacts with VWA1. Interacts (via C-terminus) with ECM1 (via C-terminus). Interacts with SVEP1. Post-translationally, proteolytic processing produces the C-terminal angiogenic peptide, endorepellin. This peptide can be further processed to produce the LG3 peptide. In terms of processing, O-glycosylated. Contains three heparan sulfate chains. Also contains chondroitin sulfate.

It localises to the secreted. The protein resides in the extracellular space. Its subcellular location is the extracellular matrix. The protein localises to the basement membrane. Integral component of basement membranes. Component of the glomerular basement membrane (GBM), responsible for the fixed negative electrostatic membrane charge, and which provides a barrier which is both size- and charge-selective. It serves as an attachment substrate for cells. Plays essential roles in vascularization. Critical for normal heart development and for regulating the vascular response to injury. Also required for avascular cartilage development. Functionally, anti-angiogenic and anti-tumor peptide that inhibits endothelial cell migration, collagen-induced endothelial tube morphogenesis and blood vessel growth in the chorioallantoic membrane. Blocks endothelial cell adhesion to fibronectin and type I collagen. Anti-tumor agent in neovascularization. Interaction with its ligand, integrin alpha2/beta1, is required for the anti-angiogenic properties. Evokes a reduction in phosphorylation of receptor tyrosine kinases via alpha2/beta1 integrin-mediated activation of the tyrosine phosphatase, PTPN6. In terms of biological role, has anti-angiogenic properties that require binding of calcium ions for full activity. The chain is Basement membrane-specific heparan sulfate proteoglycan core protein (Hspg2) from Mus musculus (Mouse).